A 466-amino-acid polypeptide reads, in one-letter code: tRNA modification GTPase MnmE (466 aa).

(6S)-5-formyl-5,6,7,8-tetrahydrofolate is bound by residues R22, E87, and R126. In terms of domain architecture, TrmE-type G spans 222–382; it reads GWRTVIVGRP…LTELIRRMVY (161 aa). A K(+)-binding site is contributed by N232. GTP contacts are provided by residues 232-237, 251-257, and 276-279; these read NVGKSS, TEIPGTT, and DTAG. S236 serves as a coordination point for Mg(2+). Residues T251, I253, and T256 each coordinate K(+). T257 is a binding site for Mg(2+). K466 serves as a coordination point for (6S)-5-formyl-5,6,7,8-tetrahydrofolate.

It belongs to the TRAFAC class TrmE-Era-EngA-EngB-Septin-like GTPase superfamily. TrmE GTPase family. Homodimer. Heterotetramer of two MnmE and two MnmG subunits. Requires K(+) as cofactor.

Its subcellular location is the cytoplasm. Functionally, exhibits a very high intrinsic GTPase hydrolysis rate. Involved in the addition of a carboxymethylaminomethyl (cmnm) group at the wobble position (U34) of certain tRNAs, forming tRNA-cmnm(5)s(2)U34. This Heliobacterium modesticaldum (strain ATCC 51547 / Ice1) protein is tRNA modification GTPase MnmE.